Consider the following 411-residue polypeptide: ATP-dependent RNA helicase eIF4A (411 aa).

Residues 1–23 (MSKPEDTSAAAAAPAGEAGNNLN) are disordered. Positions 9 to 19 (AAAAAPAGEAG) are enriched in low complexity. Residues 38-66 (DNFDNMELKEELLRGVYAYGFERPSAIQA) carry the Q motif motif. The 171-residue stretch at 69–239 (IVPVIKGHDV…KKFMRDPIRI (171 aa)) folds into the Helicase ATP-binding domain. Residue 82–89 (AQSGTGKT) coordinates ATP. Positions 187-190 (DEAD) match the DEAD box motif. Residues 250 to 411 (GIKQFYVAVE…EMPLNVADLI (162 aa)) form the Helicase C-terminal domain.

Belongs to the DEAD box helicase family. eIF4A subfamily. In terms of assembly, component of the eIF4F complex, which composition varies with external and internal environmental conditions. It is composed of at least eIF4A, eIF4E and eIF4G.

The protein localises to the cytoplasm. It carries out the reaction ATP + H2O = ADP + phosphate + H(+). Its function is as follows. ATP-dependent RNA helicase which is a subunit of the eIF4F complex involved in cap recognition and is required for mRNA binding to ribosome. In the current model of translation initiation, eIF4A unwinds RNA secondary structures in the 5'-UTR of mRNAs which is necessary to allow efficient binding of the small ribosomal subunit, and subsequent scanning for the initiator codon. The protein is ATP-dependent RNA helicase eIF4A (TIF1) of Mycosarcoma maydis (Corn smut fungus).